A 101-amino-acid chain; its full sequence is Small ribosomal subunit protein uS14c (101 aa).

The protein belongs to the universal ribosomal protein uS14 family. As to quaternary structure, part of the 30S ribosomal subunit.

It is found in the plastid. Binds 16S rRNA, required for the assembly of 30S particles. This Helicosporidium sp. subsp. Simulium jonesii (Green alga) protein is Small ribosomal subunit protein uS14c.